Reading from the N-terminus, the 408-residue chain is Flavohemoprotein (408 aa).

A Globin domain is found at methionine 1–glycine 138. Position 85 (histidine 85) interacts with heme b. Residues tyrosine 95 and glutamate 137 each act as charge relay system in the active site. A reductase region spans residues glycine 149–valine 408. The 112-residue stretch at asparagine 152–aspartate 263 folds into the FAD-binding FR-type domain. Residues tyrosine 190 and arginine 205 to serine 208 each bind FAD. Glycine 277 to proline 282 is a binding site for NADP(+). Phenylalanine 398–proline 401 is an FAD binding site.

This sequence belongs to the globin family. Two-domain flavohemoproteins subfamily. In the C-terminal section; belongs to the flavoprotein pyridine nucleotide cytochrome reductase family. Requires heme b as cofactor. It depends on FAD as a cofactor.

It catalyses the reaction 2 nitric oxide + NADPH + 2 O2 = 2 nitrate + NADP(+) + H(+). It carries out the reaction 2 nitric oxide + NADH + 2 O2 = 2 nitrate + NAD(+) + H(+). The chain is Flavohemoprotein from Rhodopirellula baltica (strain DSM 10527 / NCIMB 13988 / SH1).